The chain runs to 136 residues: Monothiol glutaredoxin-S3 (136 aa).

The region spanning 18 to 135 is the Glutaredoxin domain; sequence EREVRRAVEE…PVLKQAGALW (118 aa). Cys-38 provides a ligand contact to [2Fe-2S] cluster. Residues 133–136 carry the Responsive for interaction with TGA factors motif; it reads ALWL.

Belongs to the glutaredoxin family. CC-type subfamily.

It localises to the cytoplasm. Its subcellular location is the nucleus. In terms of biological role, may only reduce GSH-thiol disulfides, but not protein disulfides. The polypeptide is Monothiol glutaredoxin-S3 (GRXS3) (Oryza sativa subsp. japonica (Rice)).